Here is a 256-residue protein sequence, read N- to C-terminus: Trypsin epsilon (256 aa).

Residues 1-22 (MLKIAVLLSVLACALAGTIPDG) form the signal peptide. Residues 23-30 (LLPQLDGR) constitute a propeptide, activation peptide. One can recognise a Peptidase S1 domain in the interval 31-254 (IVGGYETSID…FHEWIERTAR (224 aa)). A disulfide bridge connects residues cysteine 56 and cysteine 72. Active-site charge relay system residues include histidine 71 and aspartate 116. 2 disulfides stabilise this stretch: cysteine 180-cysteine 197 and cysteine 206-cysteine 230. Serine 210 serves as the catalytic Charge relay system.

Belongs to the peptidase S1 family.

The protein resides in the secreted. The protein localises to the extracellular space. The enzyme catalyses Preferential cleavage: Arg-|-Xaa, Lys-|-Xaa.. The chain is Trypsin epsilon (epsilonTry) from Drosophila erecta (Fruit fly).